Here is an 88-residue protein sequence, read N- to C-terminus: Small ribosomal subunit protein uS17 (88 aa).

The protein belongs to the universal ribosomal protein uS17 family. In terms of assembly, part of the 30S ribosomal subunit.

Its function is as follows. One of the primary rRNA binding proteins, it binds specifically to the 5'-end of 16S ribosomal RNA. This is Small ribosomal subunit protein uS17 from Yersinia pseudotuberculosis serotype O:1b (strain IP 31758).